The following is a 312-amino-acid chain: Light-independent protochlorophyllide reductase iron-sulfur ATP-binding protein (312 aa).

ATP contacts are provided by residues G55–T60 and K84. S59 contacts Mg(2+). [4Fe-4S] cluster-binding residues include C140 and C174. Residues N225–R226 and P249–L251 each bind ATP.

Belongs to the NifH/BchL/ChlL family. As to quaternary structure, homodimer. Protochlorophyllide reductase is composed of three subunits; BchL, BchN and BchB. [4Fe-4S] cluster serves as cofactor.

It catalyses the reaction chlorophyllide a + oxidized 2[4Fe-4S]-[ferredoxin] + 2 ADP + 2 phosphate = protochlorophyllide a + reduced 2[4Fe-4S]-[ferredoxin] + 2 ATP + 2 H2O. The protein operates within porphyrin-containing compound metabolism; bacteriochlorophyll biosynthesis (light-independent). In terms of biological role, component of the dark-operative protochlorophyllide reductase (DPOR) that uses Mg-ATP and reduced ferredoxin to reduce ring D of protochlorophyllide (Pchlide) to form chlorophyllide a (Chlide). This reaction is light-independent. The L component serves as a unique electron donor to the NB-component of the complex, and binds Mg-ATP. This is Light-independent protochlorophyllide reductase iron-sulfur ATP-binding protein from Rhodopseudomonas palustris (strain BisB18).